We begin with the raw amino-acid sequence, 445 residues long: Histone acetyltransferase of the MYST family 1 (445 aa).

The region spanning 60-118 is the Tudor-knot domain; sequence LEVGTRVMCQWRDGKYHPVKVIERRKNYNGGHNDYEYYVHYTEFNRRLDEWIKLEQLDL. Residues 169–440 form the MYST-type HAT domain; the sequence is TKVKNIATIE…VDVSKMIWTP (272 aa). The C2HC MYST-type zinc finger occupies 202–227; that stretch reads LFFCEFCLSFMKRKEQLQRHMRKCDL. At Lys269 the chain carries N6-acetyllysine; by autocatalysis. Residues 312-314 and 319-325 contribute to the acetyl-CoA site; these read ILT and QRKGYGK. Glu345 serves as the catalytic Proton donor/acceptor. Ser349 is a binding site for acetyl-CoA.

Belongs to the MYST (SAS/MOZ) family. In terms of assembly, interacts with MRG1 and MRG2. Component of the NuA4 histone acetyltransferase complex. Post-translationally, autoacetylation at Lys-269 is required for proper function. Expressed in cotyledons, leaves, stems, roots and, at higher levels in developing flowers, particularly in the anthers and gynoecia. Constitutively expressed in all tissues, predominantly in shoot apical meristem.

The protein resides in the nucleus. The catalysed reaction is L-lysyl-[protein] + acetyl-CoA = N(6)-acetyl-L-lysyl-[protein] + CoA + H(+). Functionally, histone acetyltransferase which may be involved in transcriptional activation. Acetylates 'Lys-5' of histone H4 (H4K5ac). Essential for gametophyte development. Involved in DNA repair after UV-B exposure. Negative regulator of flowering controlling the H4K5ac levels in the FLC chromatin. This is Histone acetyltransferase of the MYST family 1 from Arabidopsis thaliana (Mouse-ear cress).